We begin with the raw amino-acid sequence, 101 residues long: 2-amino-4-ketopentanoate thiolase alpha subunit (101 aa).

It belongs to the OrtA family. Heterodimer with OrtB.

It carries out the reaction D-alanine + acetyl-CoA = (2R)-2-amino-4-oxopentanoate + CoA. In terms of biological role, involved in the ornithine fermentation pathway. Catalyzes the thiolytic cleavage of 2-amino-4-ketopentanoate (AKP) with coenzyme A (CoA) to form acetyl-CoA and alanine. It is strictly specific for AKP. This chain is 2-amino-4-ketopentanoate thiolase alpha subunit, found in Unknown prokaryotic organism.